A 109-amino-acid chain; its full sequence is Nucleoid-associated protein AHA_2212 (109 aa).

2 disordered regions span residues 1–23 (MFGK…RMQK) and 88–109 (NKSK…KMPF). Positions 11–23 (MKQAQQMQERMQK) are enriched in low complexity.

Belongs to the YbaB/EbfC family. As to quaternary structure, homodimer.

It localises to the cytoplasm. It is found in the nucleoid. Binds to DNA and alters its conformation. May be involved in regulation of gene expression, nucleoid organization and DNA protection. This Aeromonas hydrophila subsp. hydrophila (strain ATCC 7966 / DSM 30187 / BCRC 13018 / CCUG 14551 / JCM 1027 / KCTC 2358 / NCIMB 9240 / NCTC 8049) protein is Nucleoid-associated protein AHA_2212.